The sequence spans 1037 residues: Glycine dehydrogenase (decarboxylating) 1, mitochondrial (1037 aa).

A mitochondrion-targeting transit peptide spans 1–67 (MERARRLAYR…AFGRHQQTRS (67 aa)). Cysteine 98 carries the post-translational modification S-glutathionyl cysteine; transient. An S-glutathionyl cysteine mark is found at cysteine 402 and cysteine 463. Residue lysine 774 is modified to N6-(pyridoxal phosphate)lysine. An S-glutathionyl cysteine; transient mark is found at cysteine 777, cysteine 943, and cysteine 1022.

It belongs to the GcvP family. In terms of assembly, homodimer. The glycine cleavage system is composed of four proteins: P, T, L and H. Pyridoxal 5'-phosphate serves as cofactor. In terms of processing, glutathionylated at Cys-98, Cys-777, Cys-943 and Cys-1022 after S-nitrosoglutathione treatment. S-nitrosylated at unknown positions by nitric oxide. In terms of tissue distribution, expressed in leaves. Detected in roots, stems, flowers and siliques.

It localises to the mitochondrion. The enzyme catalyses N(6)-[(R)-lipoyl]-L-lysyl-[glycine-cleavage complex H protein] + glycine + H(+) = N(6)-[(R)-S(8)-aminomethyldihydrolipoyl]-L-lysyl-[glycine-cleavage complex H protein] + CO2. Its activity is regulated as follows. Inhibited by harpin, S-nitrosoglutathione (GSNO), nitric oxide, N-ethylmaleimide and 5,5'-dithiobis-(2-nitrobenzoic acid). The glycine decarboxylase (GDC) or glycine cleavage system catalyzes the degradation of glycine. The P protein binds the alpha-amino group of glycine through its pyridoxal phosphate cofactor; CO(2) is released and the remaining methylamine moiety is then transferred to the lipoamide cofactor of the H protein. In Arabidopsis thaliana (Mouse-ear cress), this protein is Glycine dehydrogenase (decarboxylating) 1, mitochondrial (GLDP1).